The sequence spans 385 residues: F-box only protein 4 (385 aa).

Phosphoserine is present on residues serine 11 and serine 46. The region spanning 54–100 is the F-box domain; it reads TSALTRLPVDVQLYILSFLSPHDLCQLGSTDHYWNKTIRDPILWRYF.

Homodimer. Part of the SCF (SKP1-CUL1-F-box) E3 ubiquitin-protein ligase complex SCF(FBXO4) formed of CUL1, SKP1, RBX1 and FBXO4. Interacts with TERF1; this interaction is prevented in the presence of GNL3L. Identified in a complex with CRYAB and CCND1. Phosphorylation at Ser-11 varies during the cell cycle. It is low in resting cells and high in the S phase and the G2/M phase of the cell cycle. Phosphorylation is decreased during late G1 phase. Phosphorylation at Ser-11 is important for homodimerization and for optimal ubiquitin ligase activity towards CCND1.

Its subcellular location is the cytoplasm. Its pathway is protein modification; protein ubiquitination. In terms of biological role, substrate recognition component of a SCF (SKP1-CUL1-F-box protein) E3 ubiquitin-protein ligase complex that mediates the ubiquitination and subsequent proteasomal degradation of target proteins. Promotes ubiquitination of cyclin-D1 (CCND1) and its subsequent proteasomal degradation. However, it does not act as a major regulator of CCND1 stability during the G1/S transition. Recognizes TERF1 and promotes its ubiquitination together with UBE2D1. Promotes ubiquitination of FXR1 following phosphorylation of FXR1 by GSK3B, leading to FXR1 degradation by the proteasome. This is F-box only protein 4 from Mus musculus (Mouse).